A 92-amino-acid chain; its full sequence is Kinetoplastid membrane protein 11 (92 aa).

It belongs to the KMP-11 family. In terms of assembly, monomer.

The protein resides in the cytoplasm. The protein localises to the cytoskeleton. May be involved in the regulation of the cytoskeleton through interaction with the subpellicular microtubules. May be involved in parasite mobility and attachment to the surface of the host cell. Behaves as a strong immunogen during infection. The protein is Kinetoplastid membrane protein 11 (KMP-11/1) of Trypanosoma brucei brucei.